The following is a 209-amino-acid chain: A-type ATP synthase subunit D (209 aa).

Belongs to the V-ATPase D subunit family. In terms of assembly, has multiple subunits with at least A(3), B(3), C, D, E, F, H, I and proteolipid K(x).

It is found in the cell membrane. Functionally, component of the A-type ATP synthase that produces ATP from ADP in the presence of a proton gradient across the membrane. The chain is A-type ATP synthase subunit D from Methanosarcina acetivorans (strain ATCC 35395 / DSM 2834 / JCM 12185 / C2A).